Reading from the N-terminus, the 378-residue chain is Probable endopolygalacturonase AFUB_016610 (378 aa).

The N-terminal stretch at 1–19 (MLKLMGSLVLLASAAEVIA) is a signal peptide. Residues 20–35 (SPAAEPVAPSTTLEKR) constitute a propeptide that is removed on maturation. Cys-38 and Cys-56 are disulfide-bonded. PbH1 repeat units follow at residues 147–169 (TSSSSITDLHILNTPVQAVSING), 170–200 (CDGLTITDITIDNSAGDTQGGHNTDAFDIGS), and 201–222 (SSNIIISGAKVYNQDDCVAVNS). The active-site Proton donor is the Asp-215. A disulfide bridge links Cys-217 with Cys-233. Residue His-237 is part of the active site. PbH1 repeat units follow at residues 252 to 273 (VENVSFTNSQVTNSDNGLRIKA) and 281 to 303 (IKGVTYSGITLSSIRKYGILIEQ). The N-linked (GlcNAc...) asparagine glycan is linked to Asn-254. Asn-327 is a glycosylation site (N-linked (GlcNAc...) asparagine). The cysteines at positions 345 and 350 are disulfide-linked. Asn-352 is a glycosylation site (N-linked (GlcNAc...) asparagine). Residues Cys-369 and Cys-378 are joined by a disulfide bond.

This sequence belongs to the glycosyl hydrolase 28 family.

The protein localises to the secreted. The catalysed reaction is (1,4-alpha-D-galacturonosyl)n+m + H2O = (1,4-alpha-D-galacturonosyl)n + (1,4-alpha-D-galacturonosyl)m.. Functionally, involved in maceration and soft-rotting of plant tissue. Hydrolyzes the 1,4-alpha glycosidic bonds of de-esterified pectate in the smooth region of the plant cell wall. This Aspergillus fumigatus (strain CBS 144.89 / FGSC A1163 / CEA10) (Neosartorya fumigata) protein is Probable endopolygalacturonase AFUB_016610.